The sequence spans 167 residues: uncharacterized protein (167 aa).

The next 2 helical transmembrane spans lie at 21 to 41 (KIGLAIFLIGAFINLIHIYKP) and 87 to 107 (MIITFILVQTTLITLDLYVFG). Positions 136-159 (RKQRLKEQREKKEQKKEQKKEKKT) are enriched in basic and acidic residues. The tract at residues 136 to 167 (RKQRLKEQREKKEQKKEQKKEKKTERRKKKKL) is disordered.

Its subcellular location is the membrane. This is an uncharacterized protein from Schizosaccharomyces pombe (strain 972 / ATCC 24843) (Fission yeast).